An 83-amino-acid polypeptide reads, in one-letter code: Cytochrome b559 subunit alpha (83 aa).

The chain crosses the membrane as a helical span at residues 21 to 35 (VIHSITIPSLFIAGW). H23 contacts heme.

Belongs to the PsbE/PsbF family. As to quaternary structure, heterodimer of an alpha subunit and a beta subunit. PSII is composed of 1 copy each of membrane proteins PsbA, PsbB, PsbC, PsbD, PsbE, PsbF, PsbH, PsbI, PsbJ, PsbK, PsbL, PsbM, PsbT, PsbX, PsbY, PsbZ, Psb30/Ycf12, at least 3 peripheral proteins of the oxygen-evolving complex and a large number of cofactors. It forms dimeric complexes. The cofactor is heme b.

The protein resides in the plastid. Its subcellular location is the chloroplast thylakoid membrane. Functionally, this b-type cytochrome is tightly associated with the reaction center of photosystem II (PSII). PSII is a light-driven water:plastoquinone oxidoreductase that uses light energy to abstract electrons from H(2)O, generating O(2) and a proton gradient subsequently used for ATP formation. It consists of a core antenna complex that captures photons, and an electron transfer chain that converts photonic excitation into a charge separation. This Amborella trichopoda protein is Cytochrome b559 subunit alpha.